The primary structure comprises 435 residues: Large ribosomal subunit protein mL65 (435 aa).

The protein belongs to the mitochondrion-specific ribosomal protein mL65 family. As to quaternary structure, component of the mitochondrial ribosome small subunit (28S) which comprises a 12S rRNA and about 30 distinct proteins.

Its subcellular location is the mitochondrion. The sequence is that of Large ribosomal subunit protein mL65 (MRPS30) from Bos taurus (Bovine).